Reading from the N-terminus, the 378-residue chain is Erythronate-4-phosphate dehydrogenase (378 aa).

Positions 45 and 66 each coordinate substrate. The NAD(+) site is built by Asp146 and Thr175. Arg208 is a catalytic residue. Asp232 contacts NAD(+). Residue Glu237 is part of the active site. His254 acts as the Proton donor in catalysis. Gly257 lines the NAD(+) pocket. Tyr258 contacts substrate.

The protein belongs to the D-isomer specific 2-hydroxyacid dehydrogenase family. PdxB subfamily. Homodimer.

The protein resides in the cytoplasm. It catalyses the reaction 4-phospho-D-erythronate + NAD(+) = (R)-3-hydroxy-2-oxo-4-phosphooxybutanoate + NADH + H(+). Its pathway is cofactor biosynthesis; pyridoxine 5'-phosphate biosynthesis; pyridoxine 5'-phosphate from D-erythrose 4-phosphate: step 2/5. Functionally, catalyzes the oxidation of erythronate-4-phosphate to 3-hydroxy-2-oxo-4-phosphonooxybutanoate. The protein is Erythronate-4-phosphate dehydrogenase of Escherichia coli O17:K52:H18 (strain UMN026 / ExPEC).